The primary structure comprises 601 residues: Aspartate--tRNA(Asp/Asn) ligase (601 aa).

Glu174 is an L-aspartate binding site. Residues 198-201 (QLFK) are aspartate. L-aspartate is bound at residue Arg220. ATP is bound by residues 220-222 (RDE) and Gln229. His459 contributes to the L-aspartate binding site. Residue Glu493 coordinates ATP. Arg500 serves as a coordination point for L-aspartate. 545-548 (GLDR) is a binding site for ATP.

This sequence belongs to the class-II aminoacyl-tRNA synthetase family. Type 1 subfamily. Homodimer.

It localises to the cytoplasm. The catalysed reaction is tRNA(Asx) + L-aspartate + ATP = L-aspartyl-tRNA(Asx) + AMP + diphosphate. Its function is as follows. Aspartyl-tRNA synthetase with relaxed tRNA specificity since it is able to aspartylate not only its cognate tRNA(Asp) but also tRNA(Asn). Reaction proceeds in two steps: L-aspartate is first activated by ATP to form Asp-AMP and then transferred to the acceptor end of tRNA(Asp/Asn). In Variovorax paradoxus (strain S110), this protein is Aspartate--tRNA(Asp/Asn) ligase.